The primary structure comprises 431 residues: MNASHQDTGFFTEALSERDPELFGAITSELGRQRDEIELIASENIVSAAVMQAQGSVMTNKYAEGYPGRRYYGGCQYVDIAENLAIERAKQLFGCGFANVQPNSGSQANQGVFQALIKPGDTILGMSLDAGGHLTHGAAPNQSGKWFNAVQYGVRQQDNLLDYDQVEALAKEHRPKLIIAGGSAIPRQIDFARMREIADMVGAYLHVDMAHFAGLVAAGEHPSPFPHAHVATTTTHKTLRGPRGGMILTNDEDIAKKVNSAIFPGIQGGPLMHVIAAKAVAFGEALRPEFKTYIQQVIANAQALSDQLIKGGLDTVTHGTDTHVVLVDLRPKGVKGNATEKALGRAHITCNKNGVPFDPEKPTVTSGIRLGSPAGTTRGFAETEFRQIADWIIEVVDGLAANGEDANEAVEDKVKAQVAALCAKFPIYPNL.

Residues leucine 128 and 132–134 (GHL) each bind (6S)-5,6,7,8-tetrahydrofolate. The residue at position 237 (lysine 237) is an N6-(pyridoxal phosphate)lysine.

Belongs to the SHMT family. In terms of assembly, homodimer. Requires pyridoxal 5'-phosphate as cofactor.

The protein localises to the cytoplasm. It catalyses the reaction (6R)-5,10-methylene-5,6,7,8-tetrahydrofolate + glycine + H2O = (6S)-5,6,7,8-tetrahydrofolate + L-serine. It participates in one-carbon metabolism; tetrahydrofolate interconversion. The protein operates within amino-acid biosynthesis; glycine biosynthesis; glycine from L-serine: step 1/1. Catalyzes the reversible interconversion of serine and glycine with tetrahydrofolate (THF) serving as the one-carbon carrier. This reaction serves as the major source of one-carbon groups required for the biosynthesis of purines, thymidylate, methionine, and other important biomolecules. Also exhibits THF-independent aldolase activity toward beta-hydroxyamino acids, producing glycine and aldehydes, via a retro-aldol mechanism. The sequence is that of Serine hydroxymethyltransferase from Ruegeria pomeroyi (strain ATCC 700808 / DSM 15171 / DSS-3) (Silicibacter pomeroyi).